Reading from the N-terminus, the 173-residue chain is Glucagon family neuropeptides (173 aa).

A signal peptide spans 1–22 (MSSKATLALLIYGIIMHYSVYS). Positions 23 to 80 (SPLGLNYPNLRLENEVYDEDGNSLPALAFDSDQIAIRSPPSVADDLYTLYYPPEKGTE) are excised as a propeptide. A Lysine amide modification is found at K166. Residues 170–173 (LGYL) constitute a propeptide that is removed on maturation.

This sequence belongs to the glucagon family.

The protein localises to the secreted. Primary role of GHRH is to release GH from the pituitary. In terms of biological role, PACAP plays pivotal roles as a neurotransmitter and/or a neuromodulator. In Oncorhynchus nerka (Sockeye salmon), this protein is Glucagon family neuropeptides.